The primary structure comprises 407 residues: Protein FAM53B (407 aa).

2 disordered regions span residues 204–286 (SSSM…RPSL) and 306–380 (ITGE…DTEP). 2 stretches are compositionally biased toward basic and acidic residues: residues 264-281 (LNEK…DTHK) and 327-339 (DAVD…HNLK). The Nuclear localization signal signature appears at 272 to 275 (KRRR). The segment covering 357–369 (ITEEVDWNCDDGT) has biased composition (acidic residues).

The protein belongs to the FAM53 family. In terms of assembly, interacts with ctnnb1. As to expression, predominantly expressed in proliferating cells throughout embryonic development.

The protein resides in the nucleus. Its function is as follows. Acts as a regulator of Wnt signaling pathway by regulating beta-catenin (ctnnb1) nuclear localization. The polypeptide is Protein FAM53B (Oryzias latipes (Japanese rice fish)).